The sequence spans 289 residues: Protoheme IX farnesyltransferase (289 aa).

The next 9 helical transmembrane spans lie at 18–38 (VTSL…EQSP), 40–60 (GFLI…SFIF), 87–107 (VVQA…VLAV), 111–131 (LLTA…YTIF), 139–159 (NIVI…AAIG), 168–188 (SLFM…AIFL), 212–232 (SIFF…FLES), 234–254 (MGFL…ILSY), and 269–289 (FFFS…DHLI).

It belongs to the UbiA prenyltransferase family. Protoheme IX farnesyltransferase subfamily.

The protein resides in the cell inner membrane. The catalysed reaction is heme b + (2E,6E)-farnesyl diphosphate + H2O = Fe(II)-heme o + diphosphate. It functions in the pathway porphyrin-containing compound metabolism; heme O biosynthesis; heme O from protoheme: step 1/1. Its function is as follows. Converts heme B (protoheme IX) to heme O by substitution of the vinyl group on carbon 2 of heme B porphyrin ring with a hydroxyethyl farnesyl side group. This chain is Protoheme IX farnesyltransferase, found in Leptospira interrogans serogroup Icterohaemorrhagiae serovar copenhageni (strain Fiocruz L1-130).